A 75-amino-acid chain; its full sequence is Conotoxin VnMKLT2-012 (75 aa).

An N-terminal signal peptide occupies residues 1–23; it reads MMKLTCVLIIAVLFLTACQLTTA. A propeptide spanning residues 24 to 45 is cleaved from the precursor; it reads ETRDEYRAVRSSDEVRNSRSTR. Over residues 31–45 the composition is skewed to basic and acidic residues; the sequence is AVRSSDEVRNSRSTR. Residues 31–50 are disordered; sequence AVRSSDEVRNSRSTRDCSGS. 3 disulfide bridges follow: Cys-47-Cys-60, Cys-54-Cys-65, and Cys-59-Cys-74.

It belongs to the conotoxin O1 superfamily. Expressed by the venom duct.

Its subcellular location is the secreted. The sequence is that of Conotoxin VnMKLT2-012 from Conus ventricosus (Mediterranean cone).